The chain runs to 129 residues: Ig lambda-1 chain V regions MOPC 104E/RPC20/J558/S104 (129 aa).

Positions 1–19 are cleaved as a signal peptide; the sequence is MAWISLILSLLALSSGAIS. A Pyrrolidone carboxylic acid modification is found at Gln-20. In terms of domain architecture, Ig-like spans 20 to 125; that stretch reads QAVVTQESAL…HWVFGGGTKL (106 aa).

In Mus musculus (Mouse), this protein is Ig lambda-1 chain V regions MOPC 104E/RPC20/J558/S104.